Reading from the N-terminus, the 392-residue chain is MKKKILASLLLSTVMVSQVAVLTTAHAETTDDKIAAQDNKISNLTAQQQEAQKQVDQIQEQVSAIQAEQSNLQAENDRLQAESKKLEGEITELSKNIVSRNQSLEKQARSAQTNGAVTSYINTIVNSKSITEAISRVAAMSEIVSANNKMLEQQKADKKAISEKQVANNDAINTVIANQQKLADDAQALTTKQAELKAAELSLAAEKATAEGEKASLLEQKAAAEAEARAAAVAEAAYKEKRASQQQSVLASANTNLTAQVQAVSESAAAPVRAKVRPTYSTNASSYPIGECTWGVKTLAPWAGDYWGNGAQWATSAAAAGFRTGSTPQVGAIACWNDGGYGHVAVVTAVESTTRIQVSESNYAGNRTIGNHRGWFNPTTTSEGFVTYIYAD.

The signal sequence occupies residues 1 to 27 (MKKKILASLLLSTVMVSQVAVLTTAHA). Coiled coils occupy residues 34-96 (IAAQ…LSKN) and 191-227 (TKQA…AEAE). Residues 47–267 (QQQEAQKQVD…TAQVQAVSES (221 aa)) form an interacts with large extracellular loop of FtsX region. The region spanning 267–390 (SAAAPVRAKV…TSEGFVTYIY (124 aa)) is the Peptidase C51 domain.

In terms of assembly, homodimer. Interacts (via N-terminal coiled coil domain) with FtsX (via large extracellular loop). This interaction directs PcsB to equatorial and septal sites of dividing cells. Interacts with FtsE.

The protein resides in the cell membrane. It localises to the cell septum. It is found in the secreted. With respect to regulation, lacks peptidoglycan-hydrolase activity in vitro, probably due to auto-inhibition by the CC domain. In the homodimer, interaction between the CC domain in one monomer and the hydrolase active site in the peptidase C51/CHAP domain in the other monomer probably mediates auto-inhibition of the hydrolase activity. In terms of biological role, peptidoglycan-hydrolase activity. Required in maintaining normal growth and cellular morphology. Involved in splitting of the septum during cell division. In Streptococcus pneumoniae serotype 2 (strain D39 / NCTC 7466), this protein is Peptidoglycan hydrolase PcsB.